We begin with the raw amino-acid sequence, 271 residues long: MPPTVFIVSDGTGITAETFAHSILSQFDQKFRLVRVPFVDSTEKAYATLEKINEAILQDGRRPIVFTTLVDSASNQIVKGSNALVLDMFQTFVEPLEQELELKSSHAMGRGHQNADTEEYKNRIEAINFSLAHDDGQSNRNLADADVILVGVSRSGKTPTSLYLAMQYGVKAANYPLIPEDFERGKLPTPLLAHRQKMFGLSIDPQRLSEIRNERRPGSKYAAPENCRYEINEAEAMMRREGIKWLSSTHKSIEEIATTILQEIKLERAAY.

151-158 provides a ligand contact to ADP; the sequence is GVSRSGKT.

Belongs to the pyruvate, phosphate/water dikinase regulatory protein family. PSRP subfamily.

The catalysed reaction is [pyruvate, water dikinase] + ADP = [pyruvate, water dikinase]-phosphate + AMP + H(+). It catalyses the reaction [pyruvate, water dikinase]-phosphate + phosphate + H(+) = [pyruvate, water dikinase] + diphosphate. Its function is as follows. Bifunctional serine/threonine kinase and phosphorylase involved in the regulation of the phosphoenolpyruvate synthase (PEPS) by catalyzing its phosphorylation/dephosphorylation. This is Putative phosphoenolpyruvate synthase regulatory protein from Paraburkholderia xenovorans (strain LB400).